Consider the following 217-residue polypeptide: Adenylate kinase (217 aa).

10–15 (GAGKGT) contacts ATP. The tract at residues 30 to 59 (STGDMLRAAVKAGSPLGVKVKDIMASGQLV) is NMP. AMP is bound by residues threonine 31, arginine 36, 57 to 59 (QLV), 85 to 88 (GFPR), and glutamine 92. The interval 122-159 (GRRVHEASGRIYHVTHNPPKTEGVDDITGEPLVQRDDD) is LID. ATP-binding positions include arginine 123 and 132–133 (IY). Residues arginine 156 and arginine 167 each contribute to the AMP site. Glycine 202 lines the ATP pocket.

This sequence belongs to the adenylate kinase family. Monomer.

The protein localises to the cytoplasm. The catalysed reaction is AMP + ATP = 2 ADP. It participates in purine metabolism; AMP biosynthesis via salvage pathway; AMP from ADP: step 1/1. In terms of biological role, catalyzes the reversible transfer of the terminal phosphate group between ATP and AMP. Plays an important role in cellular energy homeostasis and in adenine nucleotide metabolism. The sequence is that of Adenylate kinase from Teredinibacter turnerae (strain ATCC 39867 / T7901).